The primary structure comprises 560 residues: Factor VII-activating protease (560 aa).

An N-terminal signal peptide occupies residues 1-23; sequence MFARMSDLHVLLLMALVGKTACG. Residue asparagine 54 is glycosylated (N-linked (GlcNAc...) asparagine). 3 EGF-like domains span residues 73 to 109, 111 to 148, and 150 to 188; these read QADP…NKCQ, VQNT…PSCS, and VVPV…KFCE. 18 disulfides stabilise this stretch: cysteine 77–cysteine 88, cysteine 82–cysteine 97, cysteine 99–cysteine 108, cysteine 115–cysteine 125, cysteine 120–cysteine 136, cysteine 138–cysteine 147, cysteine 154–cysteine 165, cysteine 159–cysteine 176, cysteine 178–cysteine 187, cysteine 194–cysteine 276, cysteine 215–cysteine 257, cysteine 246–cysteine 271, cysteine 301–cysteine 435, cysteine 347–cysteine 363, cysteine 355–cysteine 424, cysteine 447–cysteine 515, cysteine 477–cysteine 493, and cysteine 505–cysteine 533. Residues 193 to 276 enclose the Kringle domain; that stretch reads DCYVGDGYSY…KWEYCDVSAC (84 aa). The N-linked (GlcNAc...) asparagine glycan is linked to asparagine 207. Residues 314–555 enclose the Peptidase S1 domain; that stretch reads IYGGFKSTAG…FLNWIKATIK (242 aa). Active-site charge relay system residues include histidine 362 and aspartate 411. Serine 509 functions as the Charge relay system in the catalytic mechanism.

This sequence belongs to the peptidase S1 family. In terms of assembly, heterodimer; disulfide-linked. Heterodimer of a 50 kDa heavy and a 27 kDa light chain linked by a disulfide bond. Proteolytic cleavage at Gly-23 or Met-27 can give rise to the 50 kDa heavy chain (HC) and cleavage at Arg-313 or Lys-319 can give rise to the 27 kDa light chain (LC). The HC can undergo further proteolytic cleavage giving rise to a 26 kDa fragment. The LC can undergo further proteolytic cleavage at Arg-313 leading to a 17-kDa fragment and at Arg-480 leading to a 8-kDa fragment. In terms of tissue distribution, ubiquitously expressed.

Its subcellular location is the secreted. Cleaves the alpha-chain at multiple sites and the beta-chain between 'Lys-53' and 'Lys-54' but not the gamma-chain of fibrinogen and therefore does not initiate the formation of the fibrin clot and does not cause the fibrinolysis directly. It does not cleave (activate) prothrombin and plasminogen but converts the inactive single chain urinary plasminogen activator (pro-urokinase) to the active two chain form. Activates coagulation factor VII. May function as a tumor suppressor negatively regulating cell proliferation and cell migration. The protein is Factor VII-activating protease of Homo sapiens (Human).